A 265-amino-acid polypeptide reads, in one-letter code: MTATTHAPYRLEGKVALVTGSGRGIGAAMALELGRLGAKVVVNYANSREPAEKLVQEIKELGTDAIALQANIRNVSEIVRVMDDAVAHFGGLDIVCSNAGVVSFGHLGEVTEEEFDRVFSLNTRAQFFVAREAYRHLNTHGRIILMSSNTAKEFSVPRHSVYSGSKGAIESFVRVMAKDCGDKQITVNAVAPGGTVTDMFYDVAQHYIPNGEKHSAEELQKMAATVSPLKRNGFPVDIAKVVGFLASREAEWVNGKIITVDGGAA.

NADP(+) is bound by residues Ile-25, Asn-98, and Arg-131. Residues Ser-147 and Ser-148 each act as proton donor in the active site. 3 residues coordinate NADP(+): Tyr-162, Lys-166, and Thr-197. Catalysis depends on Tyr-162, which acts as the Proton acceptor. The Lowers pKa of active site Tyr role is filled by Lys-166.

This sequence belongs to the short-chain dehydrogenases/reductases (SDR) family.

It carries out the reaction 3,8,9,10-tetrahydroxy-6-methyl-1,4-dihydroanthracen-1-one + NADPH + H(+) = (3R)-3,8,9,10-tetrahydroxy-6-methyl-1,2,3,4-tetrahydroanthracen-1-one + NADP(+). It functions in the pathway secondary metabolite biosynthesis. In terms of biological role, short chain dehydrogenase; part of the gene cluster that mediates the biosynthesis of monodictyphenone, a prenyl xanthone derivative. The pathway begins with the synthesis of atrochrysone thioester by the polyketide synthase (PKS) mdpG. The atrochrysone carboxyl ACP thioesterase mdpF then breaks the thioester bond and releases the atrochrysone carboxylic acid from mdpG. The atrochrysone carboxylic acid is then converted to atrochrysone which is further transformed into emodin anthrone. The next step is performed by the anthrone oxygenase mdpH that catalyzes the oxidation of emodinanthrone to emodin. Emodin is further modified to yield monodictyphenone via several steps involving mdpB, mdpC mdpJ, mdpK and mdpL. The short chain dehydrogenase mdpC converts the tautomers of emodin hydroquinone into the 3-hydroxy-3,4-dihydroan-thracen-1(2H)-one derivative. These enzymes with xptA, xptB and xptC are also proposed to be involved in the synthesis of shamixanthone from emodin. Especially, direct reduction of emodin by the short chain dehydrogenase mdpC followed by dehydration catalyzed by the scytalone dehydratase-like protein mdpB gives loss of oxygen and formation of chrysophanol intermediate in two simple steps. The sequence is that of Short chain dehydrogenase mdpC from Emericella nidulans (strain FGSC A4 / ATCC 38163 / CBS 112.46 / NRRL 194 / M139) (Aspergillus nidulans).